Here is a 222-residue protein sequence, read N- to C-terminus: Superoxide dismutase [Mn], mitochondrial (222 aa).

The transit peptide at 1 to 24 (MLCRAACSAGRRLGPAASTAGSRH) directs the protein to the mitochondrion. Position 50 (H50) interacts with Mn(2+). Y58 carries the 3'-nitrotyrosine modification. N6-acetyllysine; alternate is present on residues K68 and K75. 2 positions are modified to N6-succinyllysine; alternate: K68 and K75. H98 is a Mn(2+) binding site. At K114 the chain carries N6-acetyllysine. N6-acetyllysine; alternate occurs at positions 122 and 130. K122 and K130 each carry N6-succinyllysine; alternate. Mn(2+)-binding residues include D183 and H187. N6-acetyllysine is present on K202.

Belongs to the iron/manganese superoxide dismutase family. As to quaternary structure, homotetramer. Mn(2+) is required as a cofactor. Nitrated under oxidative stress. Nitration coupled with oxidation inhibits the catalytic activity. In terms of processing, acetylation at Lys-122 decreases enzymatic activity. Deacetylated by SIRT3 upon exposure to ionizing radiations or after long fasting. Post-translationally, polyubiquitinated; leading to proteasomal degradation. Deubiquitinated by USP36 which increases protein stability.

Its subcellular location is the mitochondrion matrix. It carries out the reaction 2 superoxide + 2 H(+) = H2O2 + O2. Its function is as follows. Destroys superoxide anion radicals which are normally produced within the cells and which are toxic to biological systems. The polypeptide is Superoxide dismutase [Mn], mitochondrial (Sod2) (Rattus norvegicus (Rat)).